Reading from the N-terminus, the 191-residue chain is Protein Ves (191 aa).

The protein belongs to the Ves family.

This is Protein Ves from Escherichia coli (strain K12 / MC4100 / BW2952).